Here is a 325-residue protein sequence, read N- to C-terminus: Acetyl-coenzyme A carboxylase carboxyl transferase subunit alpha (325 aa).

In terms of domain architecture, CoA carboxyltransferase C-terminal spans 35-292; it reads EIEKLEARLA…DRVLRRSLKQ (258 aa).

This sequence belongs to the AccA family. As to quaternary structure, acetyl-CoA carboxylase is a heterohexamer composed of biotin carboxyl carrier protein (AccB), biotin carboxylase (AccC) and two subunits each of ACCase subunit alpha (AccA) and ACCase subunit beta (AccD).

Its subcellular location is the cytoplasm. The enzyme catalyses N(6)-carboxybiotinyl-L-lysyl-[protein] + acetyl-CoA = N(6)-biotinyl-L-lysyl-[protein] + malonyl-CoA. It functions in the pathway lipid metabolism; malonyl-CoA biosynthesis; malonyl-CoA from acetyl-CoA: step 1/1. In terms of biological role, component of the acetyl coenzyme A carboxylase (ACC) complex. First, biotin carboxylase catalyzes the carboxylation of biotin on its carrier protein (BCCP) and then the CO(2) group is transferred by the carboxyltransferase to acetyl-CoA to form malonyl-CoA. This chain is Acetyl-coenzyme A carboxylase carboxyl transferase subunit alpha, found in Geobacillus kaustophilus (strain HTA426).